The sequence spans 302 residues: Putative S-adenosyl-L-methionine-dependent methyltransferase MAV_2803 (302 aa).

S-adenosyl-L-methionine-binding positions include D129 and 158–159 (DL).

This sequence belongs to the UPF0677 family.

Functionally, exhibits S-adenosyl-L-methionine-dependent methyltransferase activity. This Mycobacterium avium (strain 104) protein is Putative S-adenosyl-L-methionine-dependent methyltransferase MAV_2803.